The following is a 208-amino-acid chain: ATP synthase subunit b (208 aa).

The segment covering 1–18 (MFVSTAFAQTATESQPAS) has biased composition (polar residues). Residues 1-26 (MFVSTAFAQTATESQPASTAGEHGAA) form a disordered region. Residues 56-78 (SQVLWLAITFGLFYLFLSRVVLP) form a helical membrane-spanning segment.

This sequence belongs to the ATPase B chain family. In terms of assembly, F-type ATPases have 2 components, F(1) - the catalytic core - and F(0) - the membrane proton channel. F(1) has five subunits: alpha(3), beta(3), gamma(1), delta(1), epsilon(1). F(0) has three main subunits: a(1), b(2) and c(10-14). The alpha and beta chains form an alternating ring which encloses part of the gamma chain. F(1) is attached to F(0) by a central stalk formed by the gamma and epsilon chains, while a peripheral stalk is formed by the delta and b chains.

It localises to the cell inner membrane. F(1)F(0) ATP synthase produces ATP from ADP in the presence of a proton or sodium gradient. F-type ATPases consist of two structural domains, F(1) containing the extramembraneous catalytic core and F(0) containing the membrane proton channel, linked together by a central stalk and a peripheral stalk. During catalysis, ATP synthesis in the catalytic domain of F(1) is coupled via a rotary mechanism of the central stalk subunits to proton translocation. In terms of biological role, component of the F(0) channel, it forms part of the peripheral stalk, linking F(1) to F(0). The protein is ATP synthase subunit b of Brucella melitensis biotype 1 (strain ATCC 23456 / CCUG 17765 / NCTC 10094 / 16M).